A 1037-amino-acid polypeptide reads, in one-letter code: Tyrosine-protein kinase-like otk (1037 aa).

An N-terminal signal peptide occupies residues 1–23 (MDMDVMMISMCILASTFMAPGWA). Ig-like C2-type domains are found at residues 24–109 (STSG…REAS), 110–199 (PPAK…RVMS), 251–365 (PEDL…APLN), 368–464 (PGLL…VSIN), and 469–559 (PKFS…VQLV). The Extracellular segment spans residues 24–582 (STSGFLRVPQ…GGDGFLVTRA (559 aa)). 5 cysteine pairs are disulfide-bonded: C47–C96, C138–C188, C276–C354, C399–C448, and C491–C543. Residues N336, N418, N430, N445, N513, and N525 are each glycosylated (N-linked (GlcNAc...) asparagine). Residues 583-603 (VLITMTVALAYIVLVVGLMLW) traverse the membrane as a helical segment. Residues 604–1037 (CRYRRQARKA…SKAMQSVAEK (434 aa)) are Cytoplasmic-facing. Disordered stretches follow at residues 623-683 (AGGD…KSVY) and 720-777 (SAQS…KEEE). Positions 658 to 676 (KSNGDAQKSDDTACSQQSR) are enriched in polar residues. Residue S681 is modified to Phosphoserine. The 339-residue stretch at 693 to 1031 (LSELLQIGRG…QLGSALSKAM (339 aa)) folds into the Protein kinase; inactive domain. Over residues 723-734 (SDKDADTEKQHS) the composition is skewed to basic and acidic residues. Residues 739-749 (GSGGSGSGSGS) show a composition bias toward gly residues. Acidic residues predominate over residues 768 to 777 (DDIEEIKEEE).

It belongs to the protein kinase superfamily. Tyr protein kinase family. Insulin receptor subfamily. In terms of assembly, interacts with plexA; component of a receptor complex that mediates the repulsive signaling in response to Semaphorin ligands.

It is found in the cell membrane. Acts as a calcium-dependent, homophilic cell adhesion molecule that regulates neural recognition during the development of the nervous system. Component of the repulsive Plexin signaling response to regulate motor axon guidance at the embryonic stage. Also component of a receptor complex that is required in the adult visual system to innervate the lamina layer; specific targeting of R1-R6 axons. The chain is Tyrosine-protein kinase-like otk from Drosophila pseudoobscura pseudoobscura (Fruit fly).